The following is a 308-amino-acid chain: Ribosomal RNA large subunit methyltransferase F (308 aa).

The protein belongs to the methyltransferase superfamily. METTL16/RlmF family.

Its subcellular location is the cytoplasm. The catalysed reaction is adenosine(1618) in 23S rRNA + S-adenosyl-L-methionine = N(6)-methyladenosine(1618) in 23S rRNA + S-adenosyl-L-homocysteine + H(+). Functionally, specifically methylates the adenine in position 1618 of 23S rRNA. This is Ribosomal RNA large subunit methyltransferase F from Shigella flexneri serotype 5b (strain 8401).